A 227-amino-acid polypeptide reads, in one-letter code: Lipoprotein-releasing system ATP-binding protein LolD (227 aa).

In terms of domain architecture, ABC transporter spans 7–227; that stretch reads LKLTGVERHY…TISDGKVVEF (221 aa). An ATP-binding site is contributed by 43-50; it reads APSGTGKS.

It belongs to the ABC transporter superfamily. Lipoprotein translocase (TC 3.A.1.125) family. In terms of assembly, the complex is composed of two ATP-binding proteins (LolD) and two transmembrane proteins (LolC and LolE).

The protein resides in the cell inner membrane. Functionally, part of the ABC transporter complex LolCDE involved in the translocation of mature outer membrane-directed lipoproteins, from the inner membrane to the periplasmic chaperone, LolA. Responsible for the formation of the LolA-lipoprotein complex in an ATP-dependent manner. The protein is Lipoprotein-releasing system ATP-binding protein LolD of Rhizobium etli (strain ATCC 51251 / DSM 11541 / JCM 21823 / NBRC 15573 / CFN 42).